Reading from the N-terminus, the 1362-residue chain is Insulin receptor (1362 aa).

The N-terminal stretch at 1–37 (MGQGVLRGEGHPNNNPNSKVGWKSLVGIITIFMLILC) is a signal peptide. Residues 38–184 (DQSDGKICYS…DSVEDNYIEL (147 aa)) are leucine-rich region. A disulfide bridge links cysteine 45 with cysteine 63. Asparagine 53, asparagine 115, and asparagine 148 each carry an N-linked (GlcNAc...) asparagine glycan. Cystine bridges form between cysteine 163–cysteine 192, cysteine 196–cysteine 219, cysteine 206–cysteine 225, cysteine 229–cysteine 238, cysteine 233–cysteine 244, cysteine 245–cysteine 253, cysteine 249–cysteine 262, cysteine 265–cysteine 274, cysteine 278–cysteine 290, cysteine 296–cysteine 321, cysteine 303–cysteine 311, cysteine 325–cysteine 338, cysteine 341–cysteine 345, and cysteine 349–cysteine 370. The N-linked (GlcNAc...) asparagine glycan is linked to asparagine 332. N-linked (GlcNAc...) asparagine glycosylation is found at asparagine 374, asparagine 434, and asparagine 455. Cysteine 472 and cysteine 505 form a disulfide bridge. Fibronectin type-III domains follow at residues 508 to 629 (NLLT…TNET) and 633 to 730 (VPLD…IQKE). Residues asparagine 551, asparagine 627, asparagine 642, asparagine 660, and asparagine 707 are each glycosylated (N-linked (GlcNAc...) asparagine). Disulfide bonds link cysteine 683–cysteine 896 and cysteine 822–cysteine 830. Positions 694 to 714 (WTPPTEIDENGNENQTEHTSV) are disordered. Positions 705-714 (NENQTEHTSV) are enriched in polar residues. The interval 741–749 (ENYLHNEVF) is insulin-binding. Residues 759-951 (DLFGVANGTL…PDHPHSNIVK (193 aa)) are Extracellular-facing. Residues asparagine 765 and asparagine 779 are each glycosylated (N-linked (GlcNAc...) asparagine). One can recognise a Fibronectin type-III 3 domain in the interval 849–944 (VVGPITYEYV…EQAYFQVPDH (96 aa)). N-linked (GlcNAc...) asparagine glycosylation is found at asparagine 917 and asparagine 930. A helical membrane pass occupies residues 952-972 (IITGPIIAVFLLLIVLVYCVV). The Cytoplasmic portion of the chain corresponds to 973–1362 (QKKKDAEGPA…ILSLPRSSPS (390 aa)). At tyrosine 993 the chain carries Phosphotyrosine; by autocatalysis. The Protein kinase domain occupies 1012 to 1287 (INLLRELGQG…MLKDDLRPSF (276 aa)). Residues serine 1022, lysine 1046, and 1093 to 1099 (ELMAHGD) each bind ATP. Aspartate 1148 acts as the Proton donor/acceptor in catalysis. Residues 1152-1153 (RN) and aspartate 1166 each bind ATP. 5 positions are modified to phosphotyrosine; by autocatalysis: tyrosine 1174, tyrosine 1178, tyrosine 1179, tyrosine 1335, and tyrosine 1341.

It belongs to the protein kinase superfamily. Tyr protein kinase family. Insulin receptor subfamily. In terms of assembly, tetramer of 2 alpha and 2 beta chains linked by disulfide bonds. The alpha chains contribute to the formation of the ligand-binding domain, while the beta chains carry the kinase domain. Autophosphorylated on tyrosine residues in response to insulin. As to expression, localized mainly to the envelope in oocytes. Localized to the animal hemisphere during early embryonic cleavage. Expressed during organogenesis in regions of ecto- and mesodermic origins. Expressed in the entire encephalon, the otic and optic vesicles, the gills, the somites and the pronephric tubules of the embryo. Also found in adult liver, muscle and regenerated forelimbs.

The protein localises to the cell membrane. It catalyses the reaction L-tyrosyl-[protein] + ATP = O-phospho-L-tyrosyl-[protein] + ADP + H(+). Its activity is regulated as follows. Autophosphorylation activates the kinase activity. Functionally, receptor tyrosine kinase which mediates actions of insulin. May be required for forelimb regeneration. In Xenopus laevis (African clawed frog), this protein is Insulin receptor (insr).